Here is a 285-residue protein sequence, read N- to C-terminus: Acetyl-coenzyme A carboxylase carboxyl transferase subunit beta 2 (285 aa).

Positions 1-20 are disordered; sequence MAIRSLFSGNRKKKEDGQEK. Residues 26-285 form the CoA carboxyltransferase N-terminal domain; the sequence is LMTKCPECRH…MHTKGGVQHV (260 aa). 4 residues coordinate Zn(2+): Cys30, Cys33, Cys49, and Cys52. The segment at 30-52 adopts a C4-type zinc-finger fold; sequence CPECRHIQLTKELEKNHKVCTKC.

This sequence belongs to the AccD/PCCB family. As to quaternary structure, acetyl-CoA carboxylase is a heterohexamer composed of biotin carboxyl carrier protein (AccB), biotin carboxylase (AccC) and two subunits each of ACCase subunit alpha (AccA) and ACCase subunit beta (AccD). Zn(2+) serves as cofactor.

The protein resides in the cytoplasm. It carries out the reaction N(6)-carboxybiotinyl-L-lysyl-[protein] + acetyl-CoA = N(6)-biotinyl-L-lysyl-[protein] + malonyl-CoA. Its pathway is lipid metabolism; malonyl-CoA biosynthesis; malonyl-CoA from acetyl-CoA: step 1/1. In terms of biological role, component of the acetyl coenzyme A carboxylase (ACC) complex. Biotin carboxylase (BC) catalyzes the carboxylation of biotin on its carrier protein (BCCP) and then the CO(2) group is transferred by the transcarboxylase to acetyl-CoA to form malonyl-CoA. In Lysinibacillus sphaericus (strain C3-41), this protein is Acetyl-coenzyme A carboxylase carboxyl transferase subunit beta 2.